A 165-amino-acid polypeptide reads, in one-letter code: Large ribosomal subunit protein uL10 (165 aa).

The protein belongs to the universal ribosomal protein uL10 family. As to quaternary structure, part of the ribosomal stalk of the 50S ribosomal subunit. The N-terminus interacts with L11 and the large rRNA to form the base of the stalk. The C-terminus forms an elongated spine to which L12 dimers bind in a sequential fashion forming a multimeric L10(L12)X complex.

Functionally, forms part of the ribosomal stalk, playing a central role in the interaction of the ribosome with GTP-bound translation factors. The protein is Large ribosomal subunit protein uL10 of Shewanella halifaxensis (strain HAW-EB4).